Reading from the N-terminus, the 442-residue chain is Ribulose bisphosphate carboxylase/oxygenase activase 1, chloroplastic (442 aa).

A chloroplast-targeting transit peptide spans 1-58 (MATSVSTIGAVNKTPLSLNNSVAGTSVPSTAFFGKTLKKVYGKGVSSPKVTNKSLRIV). 169-176 (GGKGQGKS) serves as a coordination point for ATP.

This sequence belongs to the RuBisCO activase family.

The protein resides in the plastid. The protein localises to the chloroplast stroma. Its function is as follows. Activation of RuBisCO (ribulose-1,5-bisphosphate carboxylase/oxygenase; EC 4.1.1.39) involves the ATP-dependent carboxylation of the epsilon-amino group of lysine leading to a carbamate structure. This Nicotiana tabacum (Common tobacco) protein is Ribulose bisphosphate carboxylase/oxygenase activase 1, chloroplastic.